An 85-amino-acid polypeptide reads, in one-letter code: UPF0386 protein MXAN_1729 (85 aa).

This sequence belongs to the UPF0386 family.

This Myxococcus xanthus (strain DK1622) protein is UPF0386 protein MXAN_1729.